Here is a 146-residue protein sequence, read N- to C-terminus: Large ribosomal subunit protein uL15 (146 aa).

Basic and acidic residues predominate over residues 1 to 13; that stretch reads MKLHELKPAEGSR. Residues 1 to 51 are disordered; it reads MKLHELKPAEGSRKVRNRVGRGIGSGNGKTAGRGHKGQNARSGGGVRLGFE. Gly residues-rich tracts occupy residues 21–31 and 42–51; these read RGIGSGNGKTA and SGGGVRLGFE.

It belongs to the universal ribosomal protein uL15 family. Part of the 50S ribosomal subunit.

Binds to the 23S rRNA. This Bacillus mycoides (strain KBAB4) (Bacillus weihenstephanensis) protein is Large ribosomal subunit protein uL15.